Consider the following 957-residue polypeptide: Valine--tRNA ligase (957 aa).

A 'HIGH' region motif is present at residues 45-55 (PNVTGSLHMGH). Positions 571-575 (KMSKS) match the 'KMSKS' region motif. An ATP-binding site is contributed by Lys-574. The stretch at 887-946 (VVDFAAEQARLEKELGKAEADIKRAEAKLANEKFVANAAEEVVEEEREKREAAVARKVKI) forms a coiled coil.

The protein belongs to the class-I aminoacyl-tRNA synthetase family. ValS type 1 subfamily. As to quaternary structure, monomer.

The protein localises to the cytoplasm. It carries out the reaction tRNA(Val) + L-valine + ATP = L-valyl-tRNA(Val) + AMP + diphosphate. Functionally, catalyzes the attachment of valine to tRNA(Val). As ValRS can inadvertently accommodate and process structurally similar amino acids such as threonine, to avoid such errors, it has a 'posttransfer' editing activity that hydrolyzes mischarged Thr-tRNA(Val) in a tRNA-dependent manner. The polypeptide is Valine--tRNA ligase (Rhodopseudomonas palustris (strain ATCC BAA-98 / CGA009)).